A 452-amino-acid chain; its full sequence is Bifunctional protein GlmU (452 aa).

Residues 1-226 are pyrophosphorylase; it reads MNFSAVILAA…PIEVEGVNDR (226 aa). Residues 8–11, Lys-22, Gln-73, 78–79, 100–102, Gly-137, Glu-151, Asn-166, and Asn-224 contribute to the UDP-N-acetyl-alpha-D-glucosamine site; these read LAAG, GT, and YGD. Asp-102 is a binding site for Mg(2+). Mg(2+) is bound at residue Asn-224. The linker stretch occupies residues 227–247; that stretch reads AQLARLERAYQAAQAQKLLEQ. Residues 248-452 are N-acetyltransferase; sequence GVMLRDPSRF…IANWQRPTKK (205 aa). UDP-N-acetyl-alpha-D-glucosamine contacts are provided by Arg-330 and Lys-348. Catalysis depends on His-360, which acts as the Proton acceptor. Residues Tyr-363 and Asn-374 each coordinate UDP-N-acetyl-alpha-D-glucosamine. Acetyl-CoA is bound by residues Ala-377, 383-384, Ser-402, Ala-420, and Arg-437; that span reads NY.

The protein in the N-terminal section; belongs to the N-acetylglucosamine-1-phosphate uridyltransferase family. In the C-terminal section; belongs to the transferase hexapeptide repeat family. As to quaternary structure, homotrimer. Mg(2+) is required as a cofactor.

It is found in the cytoplasm. It carries out the reaction alpha-D-glucosamine 1-phosphate + acetyl-CoA = N-acetyl-alpha-D-glucosamine 1-phosphate + CoA + H(+). The enzyme catalyses N-acetyl-alpha-D-glucosamine 1-phosphate + UTP + H(+) = UDP-N-acetyl-alpha-D-glucosamine + diphosphate. Its pathway is nucleotide-sugar biosynthesis; UDP-N-acetyl-alpha-D-glucosamine biosynthesis; N-acetyl-alpha-D-glucosamine 1-phosphate from alpha-D-glucosamine 6-phosphate (route II): step 2/2. It functions in the pathway nucleotide-sugar biosynthesis; UDP-N-acetyl-alpha-D-glucosamine biosynthesis; UDP-N-acetyl-alpha-D-glucosamine from N-acetyl-alpha-D-glucosamine 1-phosphate: step 1/1. It participates in bacterial outer membrane biogenesis; LPS lipid A biosynthesis. Catalyzes the last two sequential reactions in the de novo biosynthetic pathway for UDP-N-acetylglucosamine (UDP-GlcNAc). The C-terminal domain catalyzes the transfer of acetyl group from acetyl coenzyme A to glucosamine-1-phosphate (GlcN-1-P) to produce N-acetylglucosamine-1-phosphate (GlcNAc-1-P), which is converted into UDP-GlcNAc by the transfer of uridine 5-monophosphate (from uridine 5-triphosphate), a reaction catalyzed by the N-terminal domain. This chain is Bifunctional protein GlmU, found in Aliivibrio fischeri (strain MJ11) (Vibrio fischeri).